A 329-amino-acid polypeptide reads, in one-letter code: Tagatose 1,6-diphosphate aldolase 2 (329 aa).

Belongs to the aldolase LacD family.

It carries out the reaction D-tagatofuranose 1,6-bisphosphate = D-glyceraldehyde 3-phosphate + dihydroxyacetone phosphate. It participates in carbohydrate metabolism; D-tagatose 6-phosphate degradation; D-glyceraldehyde 3-phosphate and glycerone phosphate from D-tagatose 6-phosphate: step 2/2. This chain is Tagatose 1,6-diphosphate aldolase 2 (lacD2), found in Streptococcus mutans serotype c (strain ATCC 700610 / UA159).